Here is a 276-residue protein sequence, read N- to C-terminus: Pyridinium-3,5-bisthiocarboxylic acid mononucleotide synthase (276 aa).

C176 (nucleophile and sulfur donor) is an active-site residue. C176 is subject to 2,3-didehydroalanine (Cys).

It belongs to the LarE family.

The enzyme catalyses pyridinium-3,5-dicarboxylate mononucleotide + [LarE protein]-L-cysteine + ATP = [LarE protein]-dehydroalanine + pyridinium-3-carboxylate-5-thiocarboxylate mononucleotide + AMP + diphosphate + H(+). It carries out the reaction [LarE protein]-L-cysteine + pyridinium-3-carboxylate-5-thiocarboxylate mononucleotide + ATP = pyridinium-3,5-bisthiocarboxylate mononucleotide + [LarE protein]-dehydroalanine + AMP + diphosphate + H(+). Involved in the biosynthesis of a nickel-pincer cofactor ((SCS)Ni(II) pincer complex). Catalyzes the ATP-dependent incorporation of two sulfur atoms in pyridinium-3,5-biscarboxylic acid mononucleotide (P2CMN) to yield pyridinium-3,5-bisthiocarboxylic acid mononucleotide (P2TMN). The source of sulfur is the enzyme itself: Cys-176 of LarE is the sulfur donor, thereby being converted into dehydroalanine, and is not regenerated in vivo. Thus, two molecules of LarE undergo sacrificial sulfur transfer to create one P2TMN. Binds nickel. Is required for the activation of the lactate racemase LarA. May also be involved in the activation of other nickel-pincer cofactor-dependent enzymes. The polypeptide is Pyridinium-3,5-bisthiocarboxylic acid mononucleotide synthase (Lactiplantibacillus plantarum (strain ATCC BAA-793 / NCIMB 8826 / WCFS1) (Lactobacillus plantarum)).